The primary structure comprises 290 residues: Nucleoid occlusion protein (290 aa).

Positions 153–172 (EALAQRLGKGQSTIANKLRL) form a DNA-binding region, H-T-H motif.

This sequence belongs to the ParB family.

The protein resides in the cytoplasm. Its subcellular location is the nucleoid. Its function is as follows. Effects nucleoid occlusion by binding relatively nonspecifically to DNA and preventing the assembly of the division machinery in the vicinity of the nucleoid, especially under conditions that disturb the cell cycle. It helps to coordinate cell division and chromosome segregation by preventing the formation of the Z ring through the nucleoid, which would cause chromosome breakage. The polypeptide is Nucleoid occlusion protein (Bacillus cereus (strain G9842)).